We begin with the raw amino-acid sequence, 316 residues long: Neuroguidin-B (316 aa).

Disordered regions lie at residues 124 to 169 and 292 to 316; these read ENDP…SKVK and VPFM…RRRH. Over residues 145–156 the composition is skewed to acidic residues; it reads DERESDSGEEGA. The span at 296–316 shows a compositional bias: basic residues; that stretch reads KKSKKGPKKSKKKKGFSRRRH.

Belongs to the SAS10 family. Part of the small subunit (SSU) processome, composed of more than 70 proteins and the RNA chaperone small nucleolar RNA (snoRNA) U3.

Its subcellular location is the nucleus. The protein resides in the nucleolus. It is found in the chromosome. It localises to the centromere. The protein localises to the cytoplasm. Its subcellular location is the cell projection. The protein resides in the axon. It is found in the dendrite. It localises to the filopodium. In terms of biological role, part of the small subunit (SSU) processome, first precursor of the small eukaryotic ribosomal subunit. During the assembly of the SSU processome in the nucleolus, many ribosome biogenesis factors, an RNA chaperone and ribosomal proteins associate with the nascent pre-rRNA and work in concert to generate RNA folding, modifications, rearrangements and cleavage as well as targeted degradation of pre-ribosomal RNA by the RNA exosome. Its dissociation from the complex determines the transition from state pre-A1 to state pre-A1*. May inhibit mRNA translation. This is Neuroguidin-B (ngdn-b) from Xenopus laevis (African clawed frog).